The sequence spans 807 residues: Glycerol-3-phosphate acyltransferase (807 aa).

The HXXXXD motif signature appears at 308–313 (CHRSHM).

The protein belongs to the GPAT/DAPAT family.

The protein resides in the cell inner membrane. The catalysed reaction is sn-glycerol 3-phosphate + an acyl-CoA = a 1-acyl-sn-glycero-3-phosphate + CoA. Its pathway is phospholipid metabolism; CDP-diacylglycerol biosynthesis; CDP-diacylglycerol from sn-glycerol 3-phosphate: step 1/3. This is Glycerol-3-phosphate acyltransferase from Shewanella sp. (strain ANA-3).